A 255-amino-acid chain; its full sequence is MTVTDNPADTAGEATAGRPAFVSRSVLVTGGNRGIGLAIARRLAADGHKVAVTHRGSGAPDDLFGVQCDVTDSAAVDRAFKEVEEHQGPVEVLVANAGISKDAFLMRMTEERFEEVINTNLTGAFRCAQRASRTMQRKRFGRIIFIGSVSGMWGIGNQANYAAAKAGLIGMARSISRELAKAGVTANVVAPGYIDTEMTRALDERIQAGALDFIPAKRVGTAEEVAGAVSFLASEDASYIAGAVIPVDGGMGMGH.

NADP(+)-binding positions include 32 to 35 (NRGI), Arg-55, 69 to 70 (DV), Gly-98, Tyr-161, Lys-165, Ile-194, and Arg-205. Tyr-161 acts as the Proton acceptor in catalysis.

The protein belongs to the short-chain dehydrogenases/reductases (SDR) family. As to quaternary structure, homotetramer.

Its subcellular location is the secreted. The protein localises to the cell wall. It catalyses the reaction a (3R)-hydroxyacyl-[ACP] + NADP(+) = a 3-oxoacyl-[ACP] + NADPH + H(+). It carries out the reaction a (3R)-3-hydroxyacyl-CoA + NADP(+) = a 3-oxoacyl-CoA + NADPH + H(+). The enzyme catalyses (3R)-3-hydroxybutanoyl-CoA + NADP(+) = acetoacetyl-CoA + NADPH + H(+). The catalysed reaction is (3R)-hydroxyoctanoyl-CoA + NADP(+) = 3-oxooctanoyl-CoA + NADPH + H(+). Its pathway is lipid metabolism; mycolic acid biosynthesis. Part of the mycobacterial fatty acid elongation system FAS-II, which is involved in mycolic acid biosynthesis. Catalyzes the NADPH-dependent reduction of beta-ketoacyl derivatives, the second step of the FAS-II elongation cycle. Has a preference for longer substrates. Can use CoA derivatives as substrates in vitro. The protein is 3-oxoacyl-[acyl-carrier-protein] reductase MabA of Mycolicibacterium smegmatis (strain ATCC 700084 / mc(2)155) (Mycobacterium smegmatis).